The following is a 312-amino-acid chain: Zinc finger CCCH domain-containing protein 25 (312 aa).

In terms of domain architecture, RRM spans 36–114; it reads AYVFVGGIPY…RIVRVDHVSK (79 aa). The C3H1-type zinc finger occupies 130–157; sequence REARGVCYAFQKGECNRGASCRYSHDEQ. The disordered stretch occupies residues 153 to 312; that stretch reads SHDEQRNANT…DSERYRKSRR (160 aa). Composition is skewed to basic and acidic residues over residues 166-184, 197-210, and 219-312; these read SKEE…EPPM, RFPD…KSTG, and EAYK…KSRR.

The protein is Zinc finger CCCH domain-containing protein 25 of Oryza sativa subsp. japonica (Rice).